Reading from the N-terminus, the 618-residue chain is Glucose starvation modulator protein 1 (618 aa).

Residues 20 to 48 (CEFCHTKHIQCDVGRPCQNCLKRNIGKFC) constitute a DNA-binding region (zn(2)-C6 fungal-type). The interval 325–352 (ANANTHPSHNAKLESECDSSSHSDADLE) is disordered. Over residues 335 to 352 (AKLESECDSSSHSDADLE) the composition is skewed to basic and acidic residues. The PAS domain maps to 466 to 538 (LLDLENMAKL…QIFNELLAFG (73 aa)).

Belongs to the ERT1/acuK family.

It is found in the nucleus. Its function is as follows. Transcription factor which regulates nonfermentable carbon utilization. Binds specifically to 5'-CGGN(8)CGG-3' and 5'-CGGN(9)CGG-3' sequences in the promoter region. The sequence is that of Glucose starvation modulator protein 1 (GSM1) from Saccharomyces cerevisiae (strain RM11-1a) (Baker's yeast).